Consider the following 119-residue polypeptide: Methylglyoxal synthase (119 aa).

An MGS-like domain is found at 1 to 119; sequence MKIALIAHDK…ESAKLIMADI (119 aa). Substrate-binding positions include His8, Lys12, 34–37, and 54–55; these read TGTT and SG. Residue Asp60 is the Proton donor/acceptor of the active site. His87 is a substrate binding site.

It belongs to the methylglyoxal synthase family.

It carries out the reaction dihydroxyacetone phosphate = methylglyoxal + phosphate. Catalyzes the formation of methylglyoxal from dihydroxyacetone phosphate. The protein is Methylglyoxal synthase of Clostridium perfringens (strain 13 / Type A).